The primary structure comprises 601 residues: uncharacterized protein (601 aa).

The disordered stretch occupies residues 127–364 (SSLFSSGSPP…PAFANDDTVH (238 aa)). Residues 128 to 137 (SLFSSGSPPD) are compositionally biased toward polar residues. Positions 141–154 (RNSTSNLSSVSTNS) are enriched in low complexity. Composition is skewed to polar residues over residues 159–177 (TIGS…ASQR), 199–213 (ALSS…NVTP), and 232–250 (SATN…SPSQ). Ser247 and Ser281 each carry phosphoserine. Low complexity predominate over residues 265 to 281 (SLSSSPSSEDSDLSLSS). Composition is skewed to basic and acidic residues over residues 286–296 (DEKKQPSKSEK) and 313–325 (GSKE…KEKA). Position 335 is a phosphoserine (Ser335). The span at 338-356 (DTSTEYDSNSLRRSRSNPA) shows a compositional bias: polar residues.

This is an uncharacterized protein from Schizosaccharomyces pombe (strain 972 / ATCC 24843) (Fission yeast).